The primary structure comprises 393 residues: MCWSFHLFFKAHKARVGARTSFLTEMERGSRDHHRDHRDHREHRETREPPTLAFHMKSWKTINKSLKAFAKLLKENTTVTFTPQPSIIIQSAKNHLVQKLTIQAECLFLSDTDRFLTKTINNHIPLFESFMNIISNPEVTKMYIQHDSDLYTRVLVTASDTCTQASVPCVHGQEVVRDTGRSPLRIDLDHSTVSDVLKWLSPVTKTKRSGKSDALMAHIIVQVNPPTIKFVTEMNELEFSNSNKVIFYDVKNMRFNLSAKNLQQALSMCAVIKTSCSLRTVAAKDCKLILTSKSTLLTVEAFLTQEQLKEESRFERMGKQDDGKGDRSHKNDDGSALASKQEMQYKITNYMVPAKNGTAGSSLFNEKEDSESDDSMHFDYSSNPNPKRQRCVV.

Disordered stretches follow at residues 25-50 (EMERGSRDHHRDHRDHREHRETREPP), 311-339 (ESRFERMGKQDDGKGDRSHKNDDGSALAS), and 355-393 (KNGTAGSSLFNEKEDSESDDSMHFDYSSNPNPKRQRCVV). Residues 31-41 (RDHHRDHRDHR) are compositionally biased toward basic residues. The span at 311–333 (ESRFERMGKQDDGKGDRSHKNDD) shows a compositional bias: basic and acidic residues.

This sequence belongs to the herpesviridae polymerase accessory protein family.

Functionally, accessory subunit of the DNA polymerase that acts to increase the processivity of polymerization. This is DNA polymerase processivity factor (U27) from Human herpesvirus 6A (strain Uganda-1102) (HHV-6 variant A).